Consider the following 179-residue polypeptide: Large ribosomal subunit protein uL5 (179 aa).

Belongs to the universal ribosomal protein uL5 family. In terms of assembly, part of the 50S ribosomal subunit; part of the 5S rRNA/L5/L18/L25 subcomplex. Contacts the 5S rRNA and the P site tRNA. Forms a bridge to the 30S subunit in the 70S ribosome.

In terms of biological role, this is one of the proteins that bind and probably mediate the attachment of the 5S RNA into the large ribosomal subunit, where it forms part of the central protuberance. In the 70S ribosome it contacts protein S13 of the 30S subunit (bridge B1b), connecting the 2 subunits; this bridge is implicated in subunit movement. Contacts the P site tRNA; the 5S rRNA and some of its associated proteins might help stabilize positioning of ribosome-bound tRNAs. The sequence is that of Large ribosomal subunit protein uL5 from Xylella fastidiosa (strain M23).